The following is a 373-amino-acid chain: Ribosomal RNA small subunit methyltransferase H (373 aa).

S-adenosyl-L-methionine-binding positions include G92–H94, D111, Y138, D159, and Q166. Composition is skewed to basic and acidic residues over residues A343 to P355 and R363 to S373. The tract at residues A343 to S373 is disordered.

Belongs to the methyltransferase superfamily. RsmH family.

The protein localises to the cytoplasm. The catalysed reaction is cytidine(1402) in 16S rRNA + S-adenosyl-L-methionine = N(4)-methylcytidine(1402) in 16S rRNA + S-adenosyl-L-homocysteine + H(+). Its function is as follows. Specifically methylates the N4 position of cytidine in position 1402 (C1402) of 16S rRNA. The chain is Ribosomal RNA small subunit methyltransferase H from Mycolicibacterium smegmatis (strain ATCC 700084 / mc(2)155) (Mycobacterium smegmatis).